The sequence spans 129 residues: Small ribosomal subunit protein uS11 (129 aa).

This sequence belongs to the universal ribosomal protein uS11 family. Part of the 30S ribosomal subunit. Interacts with proteins S7 and S18. Binds to IF-3.

Located on the platform of the 30S subunit, it bridges several disparate RNA helices of the 16S rRNA. Forms part of the Shine-Dalgarno cleft in the 70S ribosome. The chain is Small ribosomal subunit protein uS11 from Oceanobacillus iheyensis (strain DSM 14371 / CIP 107618 / JCM 11309 / KCTC 3954 / HTE831).